Reading from the N-terminus, the 265-residue chain is NAD kinase (265 aa).

Asp-45 acts as the Proton acceptor in catalysis. Residues 45 to 46, 122 to 123, Arg-148, Asp-150, 161 to 166, Ala-185, and Gln-223 each bind NAD(+); these read DG, NE, and TAYNKS.

It belongs to the NAD kinase family. Requires a divalent metal cation as cofactor.

It localises to the cytoplasm. The catalysed reaction is NAD(+) + ATP = ADP + NADP(+) + H(+). In terms of biological role, involved in the regulation of the intracellular balance of NAD and NADP, and is a key enzyme in the biosynthesis of NADP. Catalyzes specifically the phosphorylation on 2'-hydroxyl of the adenosine moiety of NAD to yield NADP. In Enterococcus faecalis (strain ATCC 700802 / V583), this protein is NAD kinase.